The following is a 59-amino-acid chain: Potassium channel toxin alpha-KTx 1.14 (59 aa).

The signal sequence occupies residues 1 to 22; that stretch reads MKKISFLLLLAIVICSIGWTDG. Glutamine 23 is modified (pyrrolidone carboxylic acid). 3 cysteine pairs are disulfide-bonded: cysteine 29–cysteine 50, cysteine 35–cysteine 55, and cysteine 39–cysteine 57.

Belongs to the short scorpion toxin superfamily. Potassium channel inhibitor family. Alpha-KTx 01 subfamily. As to expression, expressed by the venom gland.

It is found in the secreted. Potent blocker of both large-conductance calcium-activated potassium channels (KCa1.1/KCNMA1) and voltage-gated potassium channels (Kv1.3/KCNA3 and ERG1/Kv11.1/KCNH2). This Olivierus martensii (Manchurian scorpion) protein is Potassium channel toxin alpha-KTx 1.14.